Consider the following 195-residue polypeptide: MAFVLSLLMALVLVSYGPGGSLGCYLSQRLMLDARENLKLLEPMNRLSPHSCLQDRKDFGLPQEMVEGDQLQKDQAFPVLYEMLQQTFNLFHTEHSSAAWDTTLLEQLCTGLQQQLEDLDTCRGQVMGEEDSELGNMDPIVTVKKYFQGIYDYLQEKGYSDCAWEIVRVEMMRALTVSTTLQKRLTKMGGDLNSP.

An N-terminal signal peptide occupies residues 1 to 23 (MAFVLSLLMALVLVSYGPGGSLG). Intrachain disulfides connect cysteine 24/cysteine 122 and cysteine 52/cysteine 162.

Belongs to the alpha/beta interferon family. IFN-alphaII subfamily. In terms of tissue distribution, constitutively and exclusively expressed in the mononuclear cells of the extraembryonic trophectoderm.

The protein resides in the secreted. Paracrine hormone primarily responsible for maternal recognition of pregnancy. Interacts with endometrial receptors, probably type I interferon receptors, and blocks estrogen receptor expression, preventing the estrogen-induced increase in oxytocin receptor expression in the endometrium. This results in the suppression of the pulsatile endometrial release of the luteolytic hormone prostaglandin F2-alpha, hindering the regression of the corpus luteum (luteolysis) and therefore a return to ovarian cyclicity. This, and a possible direct effect of IFN-tau on prostaglandin synthesis, leads in turn to continued ovarian progesterone secretion, which stimulates the secretion by the endometrium of the nutrients required for the growth of the conceptus. In summary, displays particularly high antiviral and antiproliferative potency concurrently with particular weak cytotoxicity, high antiluteolytic activity and immunomodulatory properties. In contrast with other IFNs, IFN-tau is not virally inducible. This chain is Interferon tau-9 (IFNT9), found in Ovis aries (Sheep).